The chain runs to 143 residues: Large ribosomal subunit protein uL15 (143 aa).

A disordered region spans residues 1-52; that stretch reads MKLNTLAPAAGSKSAPKRLGRGIGSGLGKTSGKGHKGQKARSGGYHKVGFEG. The span at 21 to 31 shows a compositional bias: gly residues; that stretch reads RGIGSGLGKTS.

The protein belongs to the universal ribosomal protein uL15 family. As to quaternary structure, part of the 50S ribosomal subunit.

Its function is as follows. Binds to the 23S rRNA. In Francisella tularensis subsp. holarctica (strain FTNF002-00 / FTA), this protein is Large ribosomal subunit protein uL15.